The sequence spans 416 residues: MDYSIKEQDFEVFELIEKELERQNEHLEMIASENFTFPSVMEAMGSILTNKYAEGYPFKRYYGGCEFVDKIEEIAIERAKKLFGANFVNVQPHSGSQANAAVYAAILKPYDKILGMDLSHGGHLTHGAKVSTSGQLYQSFFYGVELNGRIDYDKLALQAQVVKPNVLVCGFSAYTRELDFKRLREIADSVGAYLMGDIAHVAGLVVAGEYPNPFPHCHIVTTTTHKTLRGPRGGAILTNDEELYAKINKAVFPGIQGGPLMHIIAGKAVGFKENLKPEWKIYAKQVKSNIQALAEVLIKRNYELVSGGSDNHLILMSFLNKDFSGKDADLALGNAGITVNKNTIPGEIRSPFITSGIRIGSPALTARGMKEKEFEWIGEKIADILDDINNTNLQEHIKAQVKNFSRDFRIYDRPIF.

Residues Leu-118 and 122-124 (GHL) contribute to the (6S)-5,6,7,8-tetrahydrofolate site. Lys-226 carries the post-translational modification N6-(pyridoxal phosphate)lysine. (6S)-5,6,7,8-tetrahydrofolate-binding positions include Glu-242 and 350-352 (SPF).

Belongs to the SHMT family. In terms of assembly, homodimer. Pyridoxal 5'-phosphate serves as cofactor.

The protein resides in the cytoplasm. The enzyme catalyses (6R)-5,10-methylene-5,6,7,8-tetrahydrofolate + glycine + H2O = (6S)-5,6,7,8-tetrahydrofolate + L-serine. Its pathway is one-carbon metabolism; tetrahydrofolate interconversion. The protein operates within amino-acid biosynthesis; glycine biosynthesis; glycine from L-serine: step 1/1. Its function is as follows. Catalyzes the reversible interconversion of serine and glycine with tetrahydrofolate (THF) serving as the one-carbon carrier. This reaction serves as the major source of one-carbon groups required for the biosynthesis of purines, thymidylate, methionine, and other important biomolecules. Also exhibits THF-independent aldolase activity toward beta-hydroxyamino acids, producing glycine and aldehydes, via a retro-aldol mechanism. The polypeptide is Serine hydroxymethyltransferase (Helicobacter hepaticus (strain ATCC 51449 / 3B1)).